We begin with the raw amino-acid sequence, 1611 residues long: Pentafunctional AROM polypeptide (1611 aa).

The 3-dehydroquinate synthase stretch occupies residues 1–391 (MSSSSADVLK…YEEKASVVAD (391 aa)). Residues 47–49 (DTN), 84–87 (EGAK), 115–117 (GGV), and D120 each bind NAD(+). R131 lines the 7-phospho-2-dehydro-3-deoxy-D-arabino-heptonate pocket. 140-141 (TT) contacts NAD(+). D147 and K153 together coordinate 7-phospho-2-dehydro-3-deoxy-D-arabino-heptonate. Position 162 (K162) interacts with NAD(+). N163 is a 7-phospho-2-dehydro-3-deoxy-D-arabino-heptonate binding site. Residues 180–183 (FLTT) and N191 contribute to the NAD(+) site. E195 contributes to the Zn(2+) binding site. 7-phospho-2-dehydro-3-deoxy-D-arabino-heptonate-binding positions include 195–198 (EVIK) and K257. The active-site Proton acceptor; for 3-dehydroquinate synthase activity is the E267. 7-phospho-2-dehydro-3-deoxy-D-arabino-heptonate contacts are provided by residues 271 to 275 (RNLVN) and H278. H278 provides a ligand contact to Zn(2+). H282 (proton acceptor; for 3-dehydroquinate synthase activity) is an active-site residue. 2 residues coordinate 7-phospho-2-dehydro-3-deoxy-D-arabino-heptonate: H294 and K363. H294 serves as a coordination point for Zn(2+). An EPSP synthase region spans residues 404–863 (VKAATPTKSP…WDDLQNKIGV (460 aa)). The active-site For EPSP synthase activity is C845. The tract at residues 892–1093 (DRPIFLIGMR…SVGNPTSFLS (202 aa)) is shikimate kinase. 899–906 (GMRGAGKT) serves as a coordination point for ATP. The interval 1094 to 1318 (LTFPDVTPAL…AAPGQLTARE (225 aa)) is 3-dehydroquinase. H1220 (proton acceptor; for 3-dehydroquinate dehydratase activity) is an active-site residue. K1248 (schiff-base intermediate with substrate; for 3-dehydroquinate dehydratase activity) is an active-site residue. The interval 1331-1611 (AKKFVLFGSP…RKAVLDKYFA (281 aa)) is shikimate dehydrogenase.

In the N-terminal section; belongs to the sugar phosphate cyclases superfamily. Dehydroquinate synthase family. This sequence in the 2nd section; belongs to the EPSP synthase family. The protein in the 3rd section; belongs to the shikimate kinase family. It in the 4th section; belongs to the type-I 3-dehydroquinase family. In the C-terminal section; belongs to the shikimate dehydrogenase family. Homodimer. It depends on Zn(2+) as a cofactor.

The protein localises to the cytoplasm. It carries out the reaction 7-phospho-2-dehydro-3-deoxy-D-arabino-heptonate = 3-dehydroquinate + phosphate. It catalyses the reaction 3-dehydroquinate = 3-dehydroshikimate + H2O. The enzyme catalyses shikimate + NADP(+) = 3-dehydroshikimate + NADPH + H(+). The catalysed reaction is shikimate + ATP = 3-phosphoshikimate + ADP + H(+). It carries out the reaction 3-phosphoshikimate + phosphoenolpyruvate = 5-O-(1-carboxyvinyl)-3-phosphoshikimate + phosphate. Its pathway is metabolic intermediate biosynthesis; chorismate biosynthesis; chorismate from D-erythrose 4-phosphate and phosphoenolpyruvate: step 2/7. It participates in metabolic intermediate biosynthesis; chorismate biosynthesis; chorismate from D-erythrose 4-phosphate and phosphoenolpyruvate: step 3/7. The protein operates within metabolic intermediate biosynthesis; chorismate biosynthesis; chorismate from D-erythrose 4-phosphate and phosphoenolpyruvate: step 4/7. It functions in the pathway metabolic intermediate biosynthesis; chorismate biosynthesis; chorismate from D-erythrose 4-phosphate and phosphoenolpyruvate: step 5/7. Its pathway is metabolic intermediate biosynthesis; chorismate biosynthesis; chorismate from D-erythrose 4-phosphate and phosphoenolpyruvate: step 6/7. In terms of biological role, the AROM polypeptide catalyzes 5 consecutive enzymatic reactions in prechorismate polyaromatic amino acid biosynthesis. This Cryptococcus neoformans var. neoformans serotype D (strain B-3501A) (Filobasidiella neoformans) protein is Pentafunctional AROM polypeptide.